The sequence spans 370 residues: Cobalt-precorrin-5B C(1)-methyltransferase (370 aa).

Belongs to the CbiD family.

It carries out the reaction Co-precorrin-5B + S-adenosyl-L-methionine = Co-precorrin-6A + S-adenosyl-L-homocysteine. It participates in cofactor biosynthesis; adenosylcobalamin biosynthesis; cob(II)yrinate a,c-diamide from sirohydrochlorin (anaerobic route): step 6/10. In terms of biological role, catalyzes the methylation of C-1 in cobalt-precorrin-5B to form cobalt-precorrin-6A. The protein is Cobalt-precorrin-5B C(1)-methyltransferase of Nostoc sp. (strain PCC 7120 / SAG 25.82 / UTEX 2576).